A 504-amino-acid polypeptide reads, in one-letter code: Maturase K (504 aa).

Belongs to the intron maturase 2 family. MatK subfamily.

The protein resides in the plastid. It is found in the chloroplast. In terms of biological role, usually encoded in the trnK tRNA gene intron. Probably assists in splicing its own and other chloroplast group II introns. The sequence is that of Maturase K from Actinidia deliciosa (Kiwi).